The primary structure comprises 137 residues: Large ribosomal subunit protein uL16 (137 aa).

Belongs to the universal ribosomal protein uL16 family. As to quaternary structure, part of the 50S ribosomal subunit.

In terms of biological role, binds 23S rRNA and is also seen to make contacts with the A and possibly P site tRNAs. This chain is Large ribosomal subunit protein uL16, found in Streptococcus pyogenes serotype M1.